The following is a 234-amino-acid chain: Phosphatidylinositol phosphate synthase (234 aa).

2 helical membrane passes run Leu28–Leu48 and Leu54–Leu70. Asp31–Thr34 provides a ligand contact to a CDP-1,2-diacyl-sn-glycerol. The Mg(2+) site is built by Asp68 and Asp71. A CDP-1,2-diacyl-sn-glycerol-binding residues include Gly72, Arg76, and Thr82. Asp89 and Asp93 together coordinate Mg(2+). The next 4 helical transmembrane spans lie at Ala91–Phe110, Leu116–Ile134, Arg155–Trp173, and Val179–Tyr197. Catalysis depends on Asp93, which acts as the Proton acceptor. A disordered region spans residues Pro211 to Arg234. The segment covering Val215 to Asp228 has biased composition (basic and acidic residues).

This sequence belongs to the CDP-alcohol phosphatidyltransferase class-I family. Homodimer. Requires Mg(2+) as cofactor.

Its subcellular location is the cell membrane. The catalysed reaction is a CDP-1,2-diacyl-sn-glycerol + 1D-myo-inositol 3-phosphate = a 1,2-diacyl-sn-glycero-3-phospho-(1D-myo-inositol-3-phosphate) + CMP + H(+). It carries out the reaction 1,2-di-(9Z-octadecenoyl)-sn-glycero-3-cytidine-5'-diphosphate + 1D-myo-inositol 3-phosphate = 1,2-di-(9Z-octadecenoyl)-sn-glycero-3-phospho-(1D-myo-inositol-3-phosphate) + CMP + H(+). It participates in phospholipid metabolism; phosphatidylinositol phosphate biosynthesis. Functionally, catalyzes the conjugation of the 1'-hydroxyl group of D-myo-inositol-3-phosphate (also named L-myo-inositol-1-phosphate) with a lipid tail of cytidine diphosphate diacylglycerol (CDP-DAG), forming phosphatidylinositol phosphate (PIP) and CMP. PIP is a precursor of phosphatidylinositol (PI) which is an essential lipid for mycobacteria required for formation of their cell wall. This chain is Phosphatidylinositol phosphate synthase, found in Mycobacterium marinum (strain ATCC BAA-535 / M).